The sequence spans 41 residues: U-theraphotoxin-Lk1a (41 aa).

3 disulfide bridges follow: Cys-1/Cys-16, Cys-8/Cys-21, and Cys-15/Cys-36.

The protein belongs to the neurotoxin 14 (magi-1) family. 08 (Ltx-4) subfamily. As to expression, expressed by the venom gland.

The protein resides in the secreted. Toxin that causes irreversible contractile paralysis in adult Aedes aegypti resulting in 100% mortality after 24 hours. The polypeptide is U-theraphotoxin-Lk1a (Lasiodora klugi (Bahia scarlet tarantula)).